We begin with the raw amino-acid sequence, 292 residues long: Protein rogdi homolog (292 aa).

The span at 1-12 (MEVQSLTITTNY) shows a compositional bias: polar residues. The interval 1-25 (MEVQSLTITTNYPPKPASPNPQDIR) is disordered.

It belongs to the rogdi family.

The protein resides in the nucleus envelope. This Caenorhabditis elegans protein is Protein rogdi homolog.